A 336-amino-acid chain; its full sequence is MKPQVGINGFGRIGRLVLRAAVASNSVNVVAVNDPFIDLEYMVYMFKYDSAHGRYKGDVKVDGGKLVIDSHRITVFQEMSASAVPWSQAGAEYIVESTGINTTVEKASAHFQGGAKKVIISAPSADSSHVRVGVNHEKYDPSMKVVSNASCTTNCLAPLAKVINDNFGIVEGLMTTVHSYTATQKVVDGPSKKAWRDGRTAAQNIVPASTGAAKRVGKVIPELNGKLTGMAFRVPTPNVSVVDLTCKLSKPATYDQIKAAVKRASESSALKRILEYTEDQVVSTDFLSTTCSSTFDARAGIALNDTFVKLIAWYDNEFGYSCRVVDLISYMFKRDH.

Residues 12–13, Asp34, and Met79 contribute to the NAD(+) site; that span reads RI. D-glyceraldehyde 3-phosphate is bound by residues 150-152, Thr181, 210-211, and Arg233; these read SCT and TG. Cys151 serves as the catalytic Nucleophile. Asn316 provides a ligand contact to NAD(+).

This sequence belongs to the glyceraldehyde-3-phosphate dehydrogenase family. In terms of assembly, homotetramer.

The protein localises to the cytoplasm. It catalyses the reaction D-glyceraldehyde 3-phosphate + phosphate + NAD(+) = (2R)-3-phospho-glyceroyl phosphate + NADH + H(+). It participates in carbohydrate degradation; glycolysis; pyruvate from D-glyceraldehyde 3-phosphate: step 1/5. The polypeptide is Glyceraldehyde-3-phosphate dehydrogenase (Echinococcus multilocularis (Fox tapeworm)).